A 95-amino-acid polypeptide reads, in one-letter code: Acylphosphatase 2 (95 aa).

The 88-residue stretch at 6-93 (RVIVTVQGRV…PLPPGFEVRP (88 aa)) folds into the Acylphosphatase-like domain. Residues R21 and N39 contribute to the active site.

This sequence belongs to the acylphosphatase family.

It carries out the reaction an acyl phosphate + H2O = a carboxylate + phosphate + H(+). This Ralstonia nicotianae (strain ATCC BAA-1114 / GMI1000) (Ralstonia solanacearum) protein is Acylphosphatase 2 (acyP2).